A 283-amino-acid polypeptide reads, in one-letter code: Pantothenate synthetase (283 aa).

Residue 30–37 participates in ATP binding; the sequence is MGYYHSGH. Catalysis depends on His-37, which acts as the Proton donor. Gln-61 serves as a coordination point for (R)-pantoate. Beta-alanine is bound at residue Gln-61. ATP is bound at residue 147–150; sequence GQKD. (R)-pantoate is bound at residue Gln-153. ATP contacts are provided by residues Val-176 and 184 to 187; that span reads MSSR.

The protein belongs to the pantothenate synthetase family. Homodimer.

It is found in the cytoplasm. It carries out the reaction (R)-pantoate + beta-alanine + ATP = (R)-pantothenate + AMP + diphosphate + H(+). Its pathway is cofactor biosynthesis; (R)-pantothenate biosynthesis; (R)-pantothenate from (R)-pantoate and beta-alanine: step 1/1. In terms of biological role, catalyzes the condensation of pantoate with beta-alanine in an ATP-dependent reaction via a pantoyl-adenylate intermediate. The chain is Pantothenate synthetase from Nitratidesulfovibrio vulgaris (strain DSM 19637 / Miyazaki F) (Desulfovibrio vulgaris).